Reading from the N-terminus, the 349-residue chain is Putative ABC transporter permease protein MJ0087 (349 aa).

The next 9 helical transmembrane spans lie at 15–35 (IIFG…ALCV), 69–89 (IFAA…MQCI), 100–120 (MGIS…FGFG), 135–155 (MITI…LLLA), 166–186 (ILAG…IQYF), 206–226 (AIWT…IYFM), 254–274 (LIGM…LGII), 295–315 (FLIP…DTFA), and 318–338 (IIAP…APMF).

It belongs to the binding-protein-dependent transport system permease family. FecCD subfamily.

The protein resides in the cell membrane. Probably part of a binding-protein-dependent transport system. Probably responsible for the translocation of the substrate across the membrane. The sequence is that of Putative ABC transporter permease protein MJ0087 from Methanocaldococcus jannaschii (strain ATCC 43067 / DSM 2661 / JAL-1 / JCM 10045 / NBRC 100440) (Methanococcus jannaschii).